Consider the following 480-residue polypeptide: Uridine 5'-monophosphate synthase (480 aa).

Ala2 bears the N-acetylalanine mark. The tract at residues 2–214 (AAADALLGSL…AFVAANPNDS (213 aa)) is OPRTase. At Tyr37 the chain carries Phosphotyrosine. Ser214 is subject to Phosphoserine. Residues 215-220 (LPSVKK) are domain linker. Positions 221-480 (EPKELSFGAR…WEAYLSRLAV (260 aa)) are OMPdecase. Ser257 is an orotidine 5'-phosphate binding site. UMP contacts are provided by residues Ser257, Asp259, and 281 to 283 (KIH). Orotidine 5'-phosphate is bound by residues Lys281, Lys314, Asp317, Thr321, Ser372, 430 to 432 (QQY), and 450 to 451 (GR). Residues Lys314 and Asp317 each act as for OMPdecase activity in the active site. UMP contacts are provided by residues Asp317, Thr321, Ser372, 430 to 432 (QQY), and 450 to 451 (GR).

It in the N-terminal section; belongs to the purine/pyrimidine phosphoribosyltransferase family. In the C-terminal section; belongs to the OMP decarboxylase family. As to quaternary structure, homodimer; dimerization is required for enzymatic activity.

The catalysed reaction is orotidine 5'-phosphate + diphosphate = orotate + 5-phospho-alpha-D-ribose 1-diphosphate. The enzyme catalyses orotidine 5'-phosphate + H(+) = UMP + CO2. Its pathway is pyrimidine metabolism; UMP biosynthesis via de novo pathway; UMP from orotate: step 1/2. It participates in pyrimidine metabolism; UMP biosynthesis via de novo pathway; UMP from orotate: step 2/2. In terms of biological role, bifunctional enzyme catalyzing the last two steps of de novo pyrimidine biosynthesis, orotate phosphoribosyltransferase (OPRT), which converts orotate to orotidine-5'-monophosphate (OMP), and orotidine-5'-monophosphate decarboxylase (ODC), the terminal enzymatic reaction that decarboxylates OMP to uridine monophosphate (UMP). This Bos taurus (Bovine) protein is Uridine 5'-monophosphate synthase (UMPS).